We begin with the raw amino-acid sequence, 212 residues long: Pyridoxine/pyridoxamine 5'-phosphate oxidase (212 aa).

Residues 8–11 (RREY) and Lys66 contribute to the substrate site. FMN is bound by residues 61 to 66 (RIVLLK), 76 to 77 (FT), Arg82, Lys83, and Gln105. Substrate is bound by residues Tyr123, Arg127, and Ser131. Residues 140-141 (QS) and Trp185 each bind FMN. Residue 191 to 193 (RLH) coordinates substrate. Residue Arg195 coordinates FMN.

Belongs to the pyridoxamine 5'-phosphate oxidase family. In terms of assembly, homodimer. FMN serves as cofactor.

It catalyses the reaction pyridoxamine 5'-phosphate + O2 + H2O = pyridoxal 5'-phosphate + H2O2 + NH4(+). The catalysed reaction is pyridoxine 5'-phosphate + O2 = pyridoxal 5'-phosphate + H2O2. It functions in the pathway cofactor metabolism; pyridoxal 5'-phosphate salvage; pyridoxal 5'-phosphate from pyridoxamine 5'-phosphate: step 1/1. The protein operates within cofactor metabolism; pyridoxal 5'-phosphate salvage; pyridoxal 5'-phosphate from pyridoxine 5'-phosphate: step 1/1. Functionally, catalyzes the oxidation of either pyridoxine 5'-phosphate (PNP) or pyridoxamine 5'-phosphate (PMP) into pyridoxal 5'-phosphate (PLP). The sequence is that of Pyridoxine/pyridoxamine 5'-phosphate oxidase from Shewanella amazonensis (strain ATCC BAA-1098 / SB2B).